The primary structure comprises 338 residues: Heat-inducible transcription repressor HrcA (338 aa).

The protein belongs to the HrcA family.

Its function is as follows. Negative regulator of class I heat shock genes (grpE-dnaK-dnaJ and groELS operons). Prevents heat-shock induction of these operons. In Bacillus thuringiensis (strain Al Hakam), this protein is Heat-inducible transcription repressor HrcA.